Here is a 633-residue protein sequence, read N- to C-terminus: Transcriptional repressor p66-alpha (633 aa).

The span at 1–18 (MTEEACRTRSQKRALERD) shows a compositional bias: basic and acidic residues. Disordered stretches follow at residues 1–59 (MTEE…PTQG) and 73–119 (RGEG…RVNG). Phosphothreonine is present on residues Thr-20 and Thr-49. Basic and acidic residues predominate over residues 86–99 (RTSHSDMKSERRPP). Residue Lys-93 forms a Glycyl lysine isopeptide (Lys-Gly) (interchain with G-Cter in SUMO2) linkage. Residues Ser-100, Ser-107, Ser-113, Ser-114, and Ser-137 each carry the phosphoserine modification. The span at 108–119 (DNEQPSSPRVNG) shows a compositional bias: polar residues. Positions 139–174 (EERERMIKQLKEELRLEEAKLVLLKKLRQSQIQKEA) form a coiled coil. Residues 144 to 178 (MIKQLKEELRLEEAKLVLLKKLRQSQIQKEATAQK) form a CR1; interaction with HDAC1, HDAC2, MBD2 and MTA2 region. Over residues 172–188 (KEATAQKPTGSVGSTVT) the composition is skewed to polar residues. Residues 172–238 (KEATAQKPTG…QASSKLGPQA (67 aa)) are disordered. Residue Lys-178 forms a Glycyl lysine isopeptide (Lys-Gly) (interchain with G-Cter in SUMO2) linkage. An interaction with ZMYND8 region spans residues 181–295 (GSVGSTVTTP…IIQQGLIRVA (115 aa)). Residue Thr-189 is modified to Phosphothreonine. Positions 196 to 212 (GTQNIPAGKPSLQTSSA) are enriched in polar residues. A Glycyl lysine isopeptide (Lys-Gly) (interchain with G-Cter in SUMO2) cross-link involves residue Lys-204. Residue Arg-225 is modified to Omega-N-methylarginine. The span at 228 to 238 (QQASSKLGPQA) shows a compositional bias: polar residues. Residue Lys-233 forms a Glycyl lysine isopeptide (Lys-Gly) (interchain with G-Cter in SUMO2) linkage. Arg-249, Arg-258, and Arg-273 each carry omega-N-methylarginine. Ser-275 carries the phosphoserine modification. Position 285 is an omega-N-methylarginine (Arg-285). Ser-340 and Ser-343 each carry phosphoserine. Positions 340–480 (SPASRQAAAK…EIEQRLLQQG (141 aa)) are CR2; histone tail-binding and interaction with CHD4 and CDK2AP1. Residues 411–464 (SREPYMCAQCKTDFTCRWREEKSGAIMCENCMTTNQKKALKVEHTSRLKAAFVK) form a GATA-type zinc finger. Residues Lys-464 and Lys-487 each participate in a glycyl lysine isopeptide (Lys-Gly) (interchain with G-Cter in SUMO2) cross-link. Ser-512 carries the post-translational modification Phosphoserine. The residue at position 539 (Arg-539) is an Asymmetric dimethylarginine; alternate. The residue at position 539 (Arg-539) is an Omega-N-methylarginine; alternate. Ser-546 and Ser-548 each carry phosphoserine. Residue Lys-550 forms a Glycyl lysine isopeptide (Lys-Gly) (interchain with G-Cter in SUMO2) linkage. Ser-556 bears the Phosphoserine mark. The disordered stretch occupies residues 561-585 (VSRTGRHSERTVSAGKGSATSNWKK). Residue Lys-585 forms a Glycyl lysine isopeptide (Lys-Gly) (interchain with G-Cter in SUMO2) linkage. Phosphoserine is present on Ser-598. Lys-605 is covalently cross-linked (Glycyl lysine isopeptide (Lys-Gly) (interchain with G-Cter in SUMO2)).

As to quaternary structure, homooligomer. Component of the nucleosome remodeling and deacetylase (NuRD) repressor complex, composed of core proteins MTA1, MTA2, MTA3, RBBP4, RBBP7, HDAC1, HDAC2, MBD2, MBD3, and peripherally associated proteins CDK2AP1, CDK2AP2, GATAD2A, GATAD2B, CHD3, CHD4 and CHD5. The exact stoichiometry of the NuRD complex is unknown, and some subunits such as MBD2 and MBD3, GATAD2A and GATAD2B, and CHD3, CHD4 and CHD5 define mutually exclusive NuRD complexes. Component of the MeCP1 histone deacetylase complex. Interacts with CDK2AP1. Interacts with CHD4. Interacts with ERCC6. Interacts with HDAC1. Interacts with HDAC2. Interacts with MBD2; this interaction is required for the enhancement of MBD2-mediated repression and for targeting to the chromatin. Interacts with MBD3. Interacts with MTA2. Interacts with ZMYND8. Interacts with histone tails, including that of histones H2A, H2B, H3 and H4, the interaction is reduced by histone acetylation. As to expression, ubiquitous, both in fetal and adult tissues.

Its subcellular location is the nucleus speckle. It is found in the nucleus. It localises to the chromosome. Functionally, transcriptional repressor. Acts as a component of the histone deacetylase NuRD complex which participates in the remodeling of chromatin. Enhances MBD2-mediated repression. Efficient repression requires the presence of GATAD2B. This is Transcriptional repressor p66-alpha (GATAD2A) from Homo sapiens (Human).